The chain runs to 363 residues: Inositol-3-phosphate synthase (363 aa).

NAD(+)-binding residues include aspartate 68, alanine 127, tyrosine 147, serine 190, aspartate 225, and lysine 238.

Belongs to the myo-inositol 1-phosphate synthase family. In terms of assembly, monomer. NAD(+) serves as cofactor.

The catalysed reaction is D-glucose 6-phosphate = 1D-myo-inositol 3-phosphate. It participates in polyol metabolism; myo-inositol biosynthesis; myo-inositol from D-glucose 6-phosphate: step 1/2. In terms of biological role, key enzyme in myo-inositol biosynthesis pathway that catalyzes the conversion of glucose 6-phosphate to 1D-myo-inositol 3-phosphate in a NAD-dependent manner. Plays a key role in oxidative stress resistance as its product is the precursor of the protective antioxidant mycothiol (MSH or AcCys-GlcN-Ins). The polypeptide is Inositol-3-phosphate synthase (Corynebacterium glutamicum (strain ATCC 13032 / DSM 20300 / JCM 1318 / BCRC 11384 / CCUG 27702 / LMG 3730 / NBRC 12168 / NCIMB 10025 / NRRL B-2784 / 534)).